The sequence spans 70 residues: Large ribosomal subunit protein bL31 (70 aa).

Positions 16, 18, 37, and 40 each coordinate Zn(2+).

It belongs to the bacterial ribosomal protein bL31 family. Type A subfamily. As to quaternary structure, part of the 50S ribosomal subunit. Zn(2+) serves as cofactor.

In terms of biological role, binds the 23S rRNA. This is Large ribosomal subunit protein bL31 from Haemophilus influenzae (strain 86-028NP).